A 916-amino-acid chain; its full sequence is DNA gyrase subunit A (916 aa).

The region spanning 42–544 is the Topo IIA-type catalytic domain; it reads LPDVRDGLKP…FGGDIADEDL (503 aa). Tyrosine 130 acts as the O-(5'-phospho-DNA)-tyrosine intermediate in catalysis. Positions 571-577 match the GyrA-box motif; sequence QRRGGRG. A compositionally biased stretch (acidic residues) spans 739 to 748; it reads SDDLEDETAD. 2 disordered regions span residues 739–774 and 897–916; these read SDDL…RGMR and ESEL…EAEN.

This sequence belongs to the type II topoisomerase GyrA/ParC subunit family. Heterotetramer, composed of two GyrA and two GyrB chains. In the heterotetramer, GyrA contains the active site tyrosine that forms a transient covalent intermediate with DNA, while GyrB binds cofactors and catalyzes ATP hydrolysis.

It localises to the cytoplasm. The enzyme catalyses ATP-dependent breakage, passage and rejoining of double-stranded DNA.. Functionally, a type II topoisomerase that negatively supercoils closed circular double-stranded (ds) DNA in an ATP-dependent manner to modulate DNA topology and maintain chromosomes in an underwound state. Negative supercoiling favors strand separation, and DNA replication, transcription, recombination and repair, all of which involve strand separation. Also able to catalyze the interconversion of other topological isomers of dsDNA rings, including catenanes and knotted rings. Type II topoisomerases break and join 2 DNA strands simultaneously in an ATP-dependent manner. The polypeptide is DNA gyrase subunit A (Neisseria gonorrhoeae).